We begin with the raw amino-acid sequence, 206 residues long: Small ribosomal subunit protein uS3 (206 aa).

In terms of domain architecture, KH type-2 spans 39-107 (IRSYINESFK…SVEVNVVGVK (69 aa)).

Belongs to the universal ribosomal protein uS3 family. Part of the 30S ribosomal subunit. Forms a tight complex with proteins S10 and S14.

Binds the lower part of the 30S subunit head. Binds mRNA in the 70S ribosome, positioning it for translation. This is Small ribosomal subunit protein uS3 from Wolbachia pipientis subsp. Culex pipiens (strain wPip).